The sequence spans 245 residues: tRNA (guanine-N(1)-)-methyltransferase (245 aa).

Residues G113 and 133 to 138 (IGDYVL) contribute to the S-adenosyl-L-methionine site.

The protein belongs to the RNA methyltransferase TrmD family. In terms of assembly, homodimer.

The protein resides in the cytoplasm. The catalysed reaction is guanosine(37) in tRNA + S-adenosyl-L-methionine = N(1)-methylguanosine(37) in tRNA + S-adenosyl-L-homocysteine + H(+). Its function is as follows. Specifically methylates guanosine-37 in various tRNAs. This chain is tRNA (guanine-N(1)-)-methyltransferase, found in Histophilus somni (strain 129Pt) (Haemophilus somnus).